Reading from the N-terminus, the 787-residue chain is Integrin beta-6 (787 aa).

The first 21 residues, 1-21 (MGIELVCLFLLLLGRNDHVQG), serve as a signal peptide directing secretion. The region spanning 22-71 (GCAWSGAETCSDCLLTGPHCAWCSQENFTHLSGAGERCDTPENLLAKGCQ) is the PSI domain. The Extracellular segment spans residues 22–708 (GCAWSGAETC…KDCPKPPNIP (687 aa)). Cystine bridges form between Cys23-Cys41, Cys31-Cys454, Cys34-Cys59, Cys44-Cys70, Cys197-Cys204, Cys252-Cys293, Cys394-Cys406, Cys426-Cys452, Cys456-Cys476, Cys467-Cys479, Cys481-Cys490, Cys492-Cys519, Cys502-Cys517, Cys511-Cys522, Cys524-Cys537, Cys539-Cys560, Cys544-Cys558, Cys552-Cys563, and Cys565-Cys574. Asn48 and Asn97 each carry an N-linked (GlcNAc...) asparagine glycan. The VWFA domain maps to 131–371 (YPVDLYYLMD…QLIISAYEEL (241 aa)). Residues Asp140, Ser142, and Ser144 each contribute to the Mg(2+) site. Ca(2+)-binding residues include Ser144, Asp147, Asp148, and Glu179. Asn235, Asp237, Pro239, and Glu240 together coordinate Ca(2+). Glu240 is a binding site for Mg(2+). Asn260 is a glycosylation site (N-linked (GlcNAc...) asparagine). Ca(2+) contacts are provided by Asp271 and Lys355. N-linked (GlcNAc...) asparagine glycosylation occurs at Asn387. Asn418 is a glycosylation site (N-linked (GlcNAc...) asparagine). 4 I-EGF domains span residues 456 to 491 (CQREVEANSSKCHHGNGSFQCGVCACNPGHMGPRCE), 492 to 538 (CGED…PYCQ), 539 to 575 (CDNFSCLRHKGLLCGDNGDCDCGECVCRDGWTGEYCN), and 576 to 615 (CTTSRDACASEDGVLCSGRGDCVCGKCVCRNPGASGPTCE). N-linked (GlcNAc...) asparagine glycans are attached at residues Asn463 and Asn471. A glycan (N-linked (GlcNAc...) asparagine) is linked at Asn541. The N-linked (GlcNAc...) asparagine glycan is linked to Asn575. Cystine bridges form between Cys576/Cys599, Cys583/Cys597, Cys591/Cys602, Cys604/Cys614, Cys617/Cys620, Cys624/Cys669, Cys630/Cys649, Cys633/Cys645, and Cys677/Cys701. N-linked (GlcNAc...) asparagine glycosylation is present at Asn695. The helical transmembrane segment at 709–729 (MIMLGVSLAILLIGVVLLCIW) threads the bilayer. Residues 730 to 757 (KLLVSFHDRKEVAKFEAERSKAKWQTGT) are interaction with HAX1. The Cytoplasmic portion of the chain corresponds to 730–787 (KLLVSFHDRKEVAKFEAERSKAKWQTGTNPLYRGSTSTFKNVTYKHREKHKVGLSSDG).

The protein belongs to the integrin beta chain family. Heterodimer of an alpha and a beta subunit. Interacts with FLNB. Interacts with HAX1. ITGAV:ITGB6 interacts with FBN1. ITGAV:ITGB6 interacts with TGFB1.

It localises to the cell membrane. The protein localises to the cell junction. It is found in the focal adhesion. Its function is as follows. Integrin alpha-V:beta-6 (ITGAV:ITGB6) is a receptor for fibronectin and cytotactin. It recognizes the sequence R-G-D in its ligands. ITGAV:ITGB6 acts as a receptor for fibrillin-1 (FBN1) and mediates R-G-D-dependent cell adhesion to FBN1. Integrin alpha-V:beta-6 (ITGAV:ITGB6) mediates R-G-D-dependent release of transforming growth factor beta-1 (TGF-beta-1) from regulatory Latency-associated peptide (LAP), thereby playing a key role in TGF-beta-1 activation. In Rattus norvegicus (Rat), this protein is Integrin beta-6 (Itgb6).